Reading from the N-terminus, the 164-residue chain is Small ribosomal subunit protein uS5 (164 aa).

In terms of domain architecture, S5 DRBM spans 10 to 73 (LEERVVAINR…EDAKKNLIEV (64 aa)).

The protein belongs to the universal ribosomal protein uS5 family. As to quaternary structure, part of the 30S ribosomal subunit. Contacts proteins S4 and S8.

With S4 and S12 plays an important role in translational accuracy. Functionally, located at the back of the 30S subunit body where it stabilizes the conformation of the head with respect to the body. The polypeptide is Small ribosomal subunit protein uS5 (Streptococcus gordonii (strain Challis / ATCC 35105 / BCRC 15272 / CH1 / DL1 / V288)).